A 75-amino-acid chain; its full sequence is Small ribosomal subunit protein bS21 (75 aa).

The tract at residues 52 to 75 (RRARKLARKRAQREGLIGGRPGAR) is disordered. Basic residues predominate over residues 53 to 62 (RARKLARKRA).

Belongs to the bacterial ribosomal protein bS21 family.

The sequence is that of Small ribosomal subunit protein bS21 from Brucella anthropi (strain ATCC 49188 / DSM 6882 / CCUG 24695 / JCM 21032 / LMG 3331 / NBRC 15819 / NCTC 12168 / Alc 37) (Ochrobactrum anthropi).